A 140-amino-acid polypeptide reads, in one-letter code: Small ribosomal subunit protein uS11 (140 aa).

A disordered region spans residues 116 to 140 (GRVEDVTPIPHDGTRPKGGRRGRRV).

Belongs to the universal ribosomal protein uS11 family. Part of the 30S ribosomal subunit.

Located on the platform of the 30S subunit. This Thermococcus kodakarensis (strain ATCC BAA-918 / JCM 12380 / KOD1) (Pyrococcus kodakaraensis (strain KOD1)) protein is Small ribosomal subunit protein uS11.